The primary structure comprises 186 residues: Putative CTD phosphatase-like protein 355R (186 aa).

Positions glutamate 2–leucine 182 constitute an FCP1 homology domain.

Belongs to the IIV-6 355R family.

In terms of biological role, may function as a phosphatase. The sequence is that of Putative CTD phosphatase-like protein 355R from Aedes vexans (Inland floodwater mosquito).